The chain runs to 70 residues: Mu-agatoxin-Ao1b (70 aa).

A signal peptide spans 1 to 20 (MKAIIFFCFLSVMVFIVAEA). Residues 21–33 (SSLEALKIFEGER) constitute a propeptide that is removed on maturation. 4 disulfides stabilise this stretch: Cys-35–Cys-50, Cys-42–Cys-55, Cys-49–Cys-65, and Cys-57–Cys-63. The residue at position 69 (Asn-69) is an Asparagine amide.

The protein belongs to the neurotoxin 07 (Beta/delta-agtx) family. 04 (aga-5) subfamily. As to expression, expressed by the venom gland.

Its subcellular location is the secreted. Its function is as follows. Insecticidal neurotoxin that modulates the insect Nav channel (DmNaV1/tipE (para/tipE)) in a unique manner, with both the activation and inactivation processes being affected. The voltage dependence of activation is shifted toward more hyperpolarized potentials (analogous to site 4 toxins) and a non-inactivating persistent sodium current is induced (site 3-like action). Interestingly, both effects take place in a voltage-dependent manner, producing a bell-shaped curve between -80 and 0 mV. The protein is Mu-agatoxin-Ao1b of Agelena orientalis (Funnel-web spider).